Reading from the N-terminus, the 199-residue chain is Pyridoxal 5'-phosphate synthase subunit PdxT (199 aa).

Residue 47-49 (GES) coordinates L-glutamine. Cysteine 79 (nucleophile) is an active-site residue. Residues arginine 106 and 133-134 (IR) each bind L-glutamine. Active-site charge relay system residues include histidine 169 and glutamate 171.

The protein belongs to the glutaminase PdxT/SNO family. In terms of assembly, in the presence of PdxS, forms a dodecamer of heterodimers. Only shows activity in the heterodimer.

It catalyses the reaction aldehydo-D-ribose 5-phosphate + D-glyceraldehyde 3-phosphate + L-glutamine = pyridoxal 5'-phosphate + L-glutamate + phosphate + 3 H2O + H(+). It carries out the reaction L-glutamine + H2O = L-glutamate + NH4(+). It functions in the pathway cofactor biosynthesis; pyridoxal 5'-phosphate biosynthesis. Catalyzes the hydrolysis of glutamine to glutamate and ammonia as part of the biosynthesis of pyridoxal 5'-phosphate. The resulting ammonia molecule is channeled to the active site of PdxS. The sequence is that of Pyridoxal 5'-phosphate synthase subunit PdxT from Desulfitobacterium hafniense (strain DSM 10664 / DCB-2).